Consider the following 554-residue polypeptide: Trimethyltridecatetraene synthase (554 aa).

The chain crosses the membrane as a helical span at residues 1–21 (MSAAVALAVILAVYVVLRYIS). Position 464 (C464) interacts with heme.

The protein belongs to the cytochrome P450 family. Heme serves as cofactor.

The protein resides in the membrane. It catalyses the reaction (6E,10E)-geranyllinalool + reduced [NADPH--hemoprotein reductase] + O2 = (3E,7E)-4,8,12-trimethyltrideca 1,3,7,11-tetraene + but-3-en-2-one + oxidized [NADPH--hemoprotein reductase] + 2 H2O + H(+). The protein operates within secondary metabolite biosynthesis; terpenoid biosynthesis. Functionally, component of the volatile terpenes biosynthesis pathways. Converts mainly geranyllinalool to trimethyltridecatetraene (TMTT). This chain is Trimethyltridecatetraene synthase, found in Zea mays (Maize).